The chain runs to 1350 residues: Ubiquitin carboxyl-terminal hydrolase 47 (1350 aa).

The interval Asp-111 to Phe-138 is disordered. Residues Pro-115–Asp-132 are compositionally biased toward polar residues. The USP domain occupies Val-173–Lys-548. The active-site Nucleophile is the Cys-182. The segment at Glu-409–Asn-437 is disordered. The span at Gln-415–Asn-437 shows a compositional bias: polar residues. Catalysis depends on His-487, which acts as the Proton acceptor. Disordered regions lie at residues His-815–Asp-836 and Ser-859–Lys-1000. Residues Ser-859 to Gly-877 are compositionally biased toward polar residues. The span at Pro-916–Asn-926 shows a compositional bias: basic and acidic residues. Over residues Ser-929–Asp-945 the composition is skewed to low complexity. Residues Lys-973 to Trp-982 are compositionally biased toward basic and acidic residues. The span at Asp-983 to Asp-996 shows a compositional bias: acidic residues.

The protein belongs to the peptidase C19 family. USP47 subfamily.

The protein localises to the cytoplasm. It catalyses the reaction Thiol-dependent hydrolysis of ester, thioester, amide, peptide and isopeptide bonds formed by the C-terminal Gly of ubiquitin (a 76-residue protein attached to proteins as an intracellular targeting signal).. Ubiquitin-specific protease that specifically deubiquitinates monoubiquitinated DNA polymerase beta (polb), stabilizing polb thereby playing a role in base-excision repair (BER). The chain is Ubiquitin carboxyl-terminal hydrolase 47 (usp47) from Xenopus laevis (African clawed frog).